We begin with the raw amino-acid sequence, 459 residues long: Cobyrinate a,c-diamide synthase (459 aa).

The GATase cobBQ-type domain maps to Arg249–Gly446. Cys332 functions as the Nucleophile in the catalytic mechanism.

Belongs to the CobB/CbiA family. The cofactor is Mg(2+).

The catalysed reaction is cob(II)yrinate + 2 L-glutamine + 2 ATP + 2 H2O = cob(II)yrinate a,c diamide + 2 L-glutamate + 2 ADP + 2 phosphate + 2 H(+). Its pathway is cofactor biosynthesis; adenosylcobalamin biosynthesis; cob(II)yrinate a,c-diamide from sirohydrochlorin (anaerobic route): step 10/10. Catalyzes the ATP-dependent amidation of the two carboxylate groups at positions a and c of cobyrinate, using either L-glutamine or ammonia as the nitrogen source. The protein is Cobyrinate a,c-diamide synthase of Syntrophotalea carbinolica (strain DSM 2380 / NBRC 103641 / GraBd1) (Pelobacter carbinolicus).